The primary structure comprises 363 residues: UDP-N-acetylglucosamine--N-acetylmuramyl-(pentapeptide) pyrophosphoryl-undecaprenol N-acetylglucosamine transferase (363 aa).

UDP-N-acetyl-alpha-D-glucosamine is bound by residues 10-12, N124, R161, S195, and Q291; that span reads TAG.

It belongs to the glycosyltransferase 28 family. MurG subfamily.

The protein localises to the cell membrane. The enzyme catalyses di-trans,octa-cis-undecaprenyl diphospho-N-acetyl-alpha-D-muramoyl-L-alanyl-D-glutamyl-meso-2,6-diaminopimeloyl-D-alanyl-D-alanine + UDP-N-acetyl-alpha-D-glucosamine = di-trans,octa-cis-undecaprenyl diphospho-[N-acetyl-alpha-D-glucosaminyl-(1-&gt;4)]-N-acetyl-alpha-D-muramoyl-L-alanyl-D-glutamyl-meso-2,6-diaminopimeloyl-D-alanyl-D-alanine + UDP + H(+). It functions in the pathway cell wall biogenesis; peptidoglycan biosynthesis. In terms of biological role, cell wall formation. Catalyzes the transfer of a GlcNAc subunit on undecaprenyl-pyrophosphoryl-MurNAc-pentapeptide (lipid intermediate I) to form undecaprenyl-pyrophosphoryl-MurNAc-(pentapeptide)GlcNAc (lipid intermediate II). The protein is UDP-N-acetylglucosamine--N-acetylmuramyl-(pentapeptide) pyrophosphoryl-undecaprenol N-acetylglucosamine transferase of Streptomyces avermitilis (strain ATCC 31267 / DSM 46492 / JCM 5070 / NBRC 14893 / NCIMB 12804 / NRRL 8165 / MA-4680).